Here is a 205-residue protein sequence, read N- to C-terminus: Glycerol-3-phosphate acyltransferase (205 aa).

5 consecutive transmembrane segments (helical) span residues 6–26 (STVL…AVVV), 55–75 (KAAI…VWLV), 89–109 (VALV…FRFV), 120–140 (ILLA…LVIA), and 162–182 (ALMF…VLLI).

The protein belongs to the PlsY family. In terms of assembly, probably interacts with PlsX.

It localises to the cell inner membrane. It catalyses the reaction an acyl phosphate + sn-glycerol 3-phosphate = a 1-acyl-sn-glycero-3-phosphate + phosphate. It participates in lipid metabolism; phospholipid metabolism. Functionally, catalyzes the transfer of an acyl group from acyl-phosphate (acyl-PO(4)) to glycerol-3-phosphate (G3P) to form lysophosphatidic acid (LPA). This enzyme utilizes acyl-phosphate as fatty acyl donor, but not acyl-CoA or acyl-ACP. This chain is Glycerol-3-phosphate acyltransferase, found in Herminiimonas arsenicoxydans.